The following is a 388-amino-acid chain: MSENGLEQEVTVEEKNNDVTEKILVEGEKSKEYEETPRKVKIVKRKKQPARKQIETRPEYEMEPEQPGQVYNLWYNKWSGGMRQDPLKSQVKSETRCVISRDSGYTKADKNPGSFFCLYFARGMCSEGSKCEYLHRLPKDTDFFNANVDCFGREKHADYRDDMGGVGSFLRQNYTLYVGGITPTDDIEEIVSRHFAEWGDIERIRVLNSRGIAFITYLNEANAQFAKEAMAHQSLDHDECLNVRWATTDPNPASQARNQRRLEERAANAVKKLLPKQFLLDLEETKNGKSGNRKRKLELEFGLKGYVPSDDLLYADGANSVHNQLAANEFPNKSQSEEGSNDDHKSVTTTESQNKFVNSQILSDLQVAKQAVHTNQSALVSYYDSDED.

Residues 43–63 (VKRKKQPARKQIETRPEYEME) form a disordered region. The C3H1-type zinc-finger motif lies at 111-138 (NPGSFFCLYFARGMCSEGSKCEYLHRLP). The 75-residue stretch at 174-248 (YTLYVGGITP…ECLNVRWATT (75 aa)) folds into the RRM domain. Residues 331–352 (PNKSQSEEGSNDDHKSVTTTES) are disordered.

The protein belongs to the RRM CWC2 family. Belongs to the 40S cdc5-associated complex (or cwf complex), a spliceosome sub-complex reminiscent of a late-stage spliceosome composed of the U2, U5 and U6 snRNAs and at least brr2, cdc5, cwf2/prp3, cwf3/syf1, cwf4/syf3, cwf5/ecm2, spp42/cwf6, cwf7/spf27, cwf8, cwf9, cwf10, cwf11, cwf12, prp45/cwf13, cwf14, cwf15, cwf16, cwf17, cwf18, cwf19, cwf20, cwf21, cwf22, cwf23, cwf24, cwf25, cwf26, cyp7/cwf27, cwf28, cwf29/ist3, lea1, msl1, prp5/cwf1, prp10, prp12/sap130, prp17, prp22, sap61, sap62, sap114, sap145, slu7, smb1, smd1, smd3, smf1, smg1 and syf2.

The protein localises to the nucleus. In terms of biological role, involved in the first step of pre-mRNA splicing. Required for cell growth and cell cycle control. Plays a role in the levels of the U1, U4, U5 and U6 snRNAs and the maintenance of the U4/U6 snRNA complex. May provide the link between the 'nineteen complex' NTC spliceosome protein complex and the spliceosome through the U6 snRNA. Associates predominantly with U6 snRNAs in assembled active spliceosomes. Binds directly to the internal stem-loop (ISL) domain of the U6 snRNA and to the pre-mRNA intron near the 5' splice site during the activation and catalytic phases of the spliceosome cycle. Involved in pre-mRNA splicing. In Schizosaccharomyces pombe (strain 972 / ATCC 24843) (Fission yeast), this protein is Pre-mRNA-splicing factor cwf2 (cwf2).